We begin with the raw amino-acid sequence, 469 residues long: MTIKTRFAPSPTGFLHVGGARTALYSWLYARANQGEFVLRIEDTDIERSTPEACAAILEGMEWLNLNWDEGPYYQTKRFDRYNEIIAQMLEQGTAYKCYCSRERIETMREEQAANGEQQKYDGCCRDKAPRDTDEPFVVRFKNPTEGSVVFDDHVRGRIEFANSTLDDLIIARTEGTPTYNFCVVVDDWDMGITCVVRGEDHINNTPRQINILKALGAPVPEYAHVAMILGDDGAKLSKRHGAVGVMQYRDDGFLPEALLNYLVRLGWSHGDQEVFSIEEMKQFFSLDDINKAASAFNTDKLIWLNQHYIKEMDPEYVASHLEWHMADQNIDTSNGPKLSEVVSALSERAKTLKELAASSRYFFEDFAEFEETAAKKHLRGVALEPLTLIQSKLAALNEWTLEAIHQAIEDTASELDVGMGKVGMPLRVAVTGAGMSPAVDLTLFLVGKARCEQRISKAIEFVANRVNS.

The short motif at 9–19 (PSPTGFLHVGG) is the 'HIGH' region element. The Zn(2+) site is built by cysteine 98, cysteine 100, cysteine 125, and aspartate 127. A 'KMSKS' region motif is present at residues 236 to 240 (KLSKR). Lysine 239 serves as a coordination point for ATP.

The protein belongs to the class-I aminoacyl-tRNA synthetase family. Glutamate--tRNA ligase type 1 subfamily. In terms of assembly, monomer. Requires Zn(2+) as cofactor.

Its subcellular location is the cytoplasm. It carries out the reaction tRNA(Glu) + L-glutamate + ATP = L-glutamyl-tRNA(Glu) + AMP + diphosphate. Functionally, catalyzes the attachment of glutamate to tRNA(Glu) in a two-step reaction: glutamate is first activated by ATP to form Glu-AMP and then transferred to the acceptor end of tRNA(Glu). The sequence is that of Glutamate--tRNA ligase from Shewanella halifaxensis (strain HAW-EB4).